A 308-amino-acid polypeptide reads, in one-letter code: Ribonuclease HIII (308 aa).

The 218-residue stretch at 91–308 folds into the RNase H type-2 domain; sequence KNVIGSDEVG…TEKALKMVKK (218 aa). A divalent metal cation-binding residues include aspartate 97, glutamate 98, and aspartate 202.

This sequence belongs to the RNase HII family. RnhC subfamily. The cofactor is Mn(2+). Mg(2+) serves as cofactor.

The protein resides in the cytoplasm. It carries out the reaction Endonucleolytic cleavage to 5'-phosphomonoester.. Its function is as follows. Endonuclease that specifically degrades the RNA of RNA-DNA hybrids. This is Ribonuclease HIII from Listeria monocytogenes serotype 4b (strain CLIP80459).